The following is a 726-amino-acid chain: Beta-adducin (726 aa).

A disordered region spans residues 1–25; sequence MSEETVPEAASPPPPQGQPYFDRFS. 2 positions are modified to phosphoserine: serine 11 and serine 25. At threonine 55 the chain carries Phosphothreonine; by PKA. Phosphoserine is present on residues serine 60 and serine 344. The segment at 425-444 is interaction with calmodulin; it reads KQQKEKTRWLNTPNTYLRVN. Residues 525 to 726 form a disordered region; that stretch reads AEKSRSPSTE…KSKKKEKVES (202 aa). 2 positions are modified to phosphoserine: serine 530 and serine 532. Threonine 533 carries the phosphothreonine modification. Serine 535 carries the post-translational modification Phosphoserine. Residues 566-586 are compositionally biased toward basic and acidic residues; the sequence is EEYKKEVERKKLELDGEKETA. The segment covering 588 to 606 has biased composition (low complexity); that stretch reads EEPGSPAKSAPASPVQSPA. Serine 592, serine 596, serine 600, and serine 604 each carry phosphoserine. The residue at position 611 (threonine 611) is a Phosphothreonine. 4 positions are modified to phosphoserine: serine 613, serine 617, serine 619, and serine 621. Over residues 621–631 the composition is skewed to basic and acidic residues; it reads SLEEGTKKTET. The span at 632-645 shows a compositional bias: low complexity; it reads SKAATTEPETTQPE. Over residues 665–674 the composition is skewed to polar residues; it reads GLSQMTTSAD. Phosphothreonine is present on threonine 675. Phosphoserine is present on residues serine 686, serine 689, serine 693, serine 697, serine 699, and serine 701. Residues 689-701 show a composition bias toward low complexity; the sequence is SGPMSPEGSPSKS. Over residues 702–726 the composition is skewed to basic residues; that stretch reads PSKKKKKFRTPSFLKKSKKKEKVES. Serine 703 carries the post-translational modification Phosphoserine; by PKC. The interaction with calmodulin stretch occupies residues 704-721; sequence KKKKKFRTPSFLKKSKKK. Position 713 is a phosphoserine; by PKA and PKC (serine 713).

It belongs to the aldolase class II family. Adducin subfamily. As to quaternary structure, heterodimer of an alpha and a beta subunit. Found in a complex with ADD2, DMTN and SLC2A1. Interacts with SLC2A1. Post-translationally, the N-terminus is blocked. As to expression, expressed mainly in brain, spleen, kidney cortex and medulla, and heart. Also expressed in human umbilical vein endothelial cells, human vascular smooth muscle cells, kidney tubular cells and K-562 cell line.

It is found in the cytoplasm. Its subcellular location is the cytoskeleton. The protein localises to the cell membrane. In terms of biological role, membrane-cytoskeleton-associated protein that promotes the assembly of the spectrin-actin network. Binds to the erythrocyte membrane receptor SLC2A1/GLUT1 and may therefore provide a link between the spectrin cytoskeleton to the plasma membrane. Binds to calmodulin. Calmodulin binds preferentially to the beta subunit. This chain is Beta-adducin (ADD2), found in Homo sapiens (Human).